Reading from the N-terminus, the 82-residue chain is Small ribosomal subunit protein bS16 (82 aa).

Belongs to the bacterial ribosomal protein bS16 family.

The polypeptide is Small ribosomal subunit protein bS16 (Haemophilus influenzae (strain 86-028NP)).